The sequence spans 262 residues: Acyl-[acyl-carrier-protein]--UDP-N-acetylglucosamine O-acyltransferase (262 aa).

The protein belongs to the transferase hexapeptide repeat family. LpxA subfamily. As to quaternary structure, homotrimer.

It localises to the cytoplasm. It catalyses the reaction a (3R)-hydroxyacyl-[ACP] + UDP-N-acetyl-alpha-D-glucosamine = a UDP-3-O-[(3R)-3-hydroxyacyl]-N-acetyl-alpha-D-glucosamine + holo-[ACP]. It participates in glycolipid biosynthesis; lipid IV(A) biosynthesis; lipid IV(A) from (3R)-3-hydroxytetradecanoyl-[acyl-carrier-protein] and UDP-N-acetyl-alpha-D-glucosamine: step 1/6. Its function is as follows. Involved in the biosynthesis of lipid A, a phosphorylated glycolipid that anchors the lipopolysaccharide to the outer membrane of the cell. The sequence is that of Acyl-[acyl-carrier-protein]--UDP-N-acetylglucosamine O-acyltransferase from Campylobacter curvus (strain 525.92).